An 80-amino-acid chain; its full sequence is Exodeoxyribonuclease 7 small subunit (80 aa).

The protein belongs to the XseB family. In terms of assembly, heterooligomer composed of large and small subunits.

The protein resides in the cytoplasm. The catalysed reaction is Exonucleolytic cleavage in either 5'- to 3'- or 3'- to 5'-direction to yield nucleoside 5'-phosphates.. In terms of biological role, bidirectionally degrades single-stranded DNA into large acid-insoluble oligonucleotides, which are then degraded further into small acid-soluble oligonucleotides. This chain is Exodeoxyribonuclease 7 small subunit, found in Rickettsia africae (strain ESF-5).